A 425-amino-acid chain; its full sequence is Serine--tRNA ligase (425 aa).

Thr-228–Glu-230 contributes to the L-serine binding site. ATP is bound at residue Arg-259–Glu-261. Glu-282 lines the L-serine pocket. An ATP-binding site is contributed by Glu-346–Ser-349. Ser-384 is an L-serine binding site.

The protein belongs to the class-II aminoacyl-tRNA synthetase family. Type-1 seryl-tRNA synthetase subfamily. As to quaternary structure, homodimer. The tRNA molecule binds across the dimer.

It is found in the cytoplasm. It catalyses the reaction tRNA(Ser) + L-serine + ATP = L-seryl-tRNA(Ser) + AMP + diphosphate + H(+). The catalysed reaction is tRNA(Sec) + L-serine + ATP = L-seryl-tRNA(Sec) + AMP + diphosphate + H(+). The protein operates within aminoacyl-tRNA biosynthesis; selenocysteinyl-tRNA(Sec) biosynthesis; L-seryl-tRNA(Sec) from L-serine and tRNA(Sec): step 1/1. In terms of biological role, catalyzes the attachment of serine to tRNA(Ser). Is also able to aminoacylate tRNA(Sec) with serine, to form the misacylated tRNA L-seryl-tRNA(Sec), which will be further converted into selenocysteinyl-tRNA(Sec). The protein is Serine--tRNA ligase of Ehrlichia ruminantium (strain Gardel).